A 329-amino-acid chain; its full sequence is Ceramide synthase hyl-2 (329 aa).

The N-linked (GlcNAc...) asparagine glycan is linked to asparagine 22. A run of 7 helical transmembrane segments spans residues 41–61 (VLTG…IFVP), 95–115 (ALYY…ESHL), 134–154 (VAWY…GILF), 162–182 (FWQM…SWTM), 187–207 (VGTL…VGKI), 221–241 (FAGV…FWII), and 270–290 (FIML…YILF). In terms of domain architecture, TLC spans 86–298 (SRMAECAMRA…LFKIAYDTIQ (213 aa)).

Belongs to the sphingosine N-acyltransferase family. Strong expression in the gut, the posterior bulb of the pharynx, the hypoderm, and unidentified cells of the head and the tail.

The protein resides in the membrane. It catalyses the reaction a very long-chain fatty acyl-CoA + a sphingoid base = an N-(very-long-chain fatty acyl)-sphingoid base + CoA + H(+). The enzyme catalyses a fatty acyl-CoA + sphinganine = an N-acylsphinganine + CoA + H(+). It carries out the reaction docosanoyl-CoA + sphinganine = N-docosanoylsphinganine + CoA + H(+). The catalysed reaction is sphinganine + tetradecanoyl-CoA = N-(tetradecanoyl)-sphinganine + CoA + H(+). It catalyses the reaction eicosanoyl-CoA + sphinganine = N-eicosanoylsphinganine + CoA + H(+). The enzyme catalyses 15-methylhexadecasphinganine + a fatty acyl-CoA = an N-acyl-15-methylhexadecasphinganine + CoA + H(+). It functions in the pathway lipid metabolism; sphingolipid metabolism. Its function is as follows. Catalyzes the acylation of sphingoid bases to form ceramides, which are key players in cell signaling events such as tolerances to heat, oxidation, and ultraviolet stress. C.elegans contain specific sphingoid bases, which are unique or different in structure compared to the sphingoid bases found in other animals. Two examples of these distinctive compounds are: 15-methylhexadecasphinganine and 15-methylhexadecasphing-4-enine. Exhibits substrate preference for long and very long fatty acyl-coA chains (C20-23). Required for adaptation of the nematode to anoxia. Anoxia tolerance may require one or more of the ceramide species that are either specifically or preferentially synthesized by HYL-2, and seems to be affected by a pathway that is parallel to that involving daf-2. This Caenorhabditis elegans protein is Ceramide synthase hyl-2 (hyl-2).